The chain runs to 245 residues: Dehydrogenase/reductase SDR family member 6 (245 aa).

Residues 16 to 18, aspartate 37, and aspartate 58 each bind NAD(+); that span reads QGI. Residue arginine 144 participates in substrate binding. Tyrosine 147 acts as the Proton acceptor in catalysis. Residues lysine 151 and 180 to 184 contribute to the NAD(+) site; that span reads VDTPS. Arginine 188 and arginine 205 together coordinate substrate.

The protein belongs to the short-chain dehydrogenases/reductases (SDR) family. In terms of assembly, homotetramer.

It is found in the cytoplasm. The catalysed reaction is cis-4-hydroxy-L-proline + NAD(+) = 4-oxo-L-proline + NADH + H(+). The enzyme catalyses (R)-3-hydroxybutanoate + NAD(+) = acetoacetate + NADH + H(+). It participates in amino-acid metabolism. Its pathway is siderophore biosynthesis. In terms of biological role, NAD(H)-dependent dehydrogenase/reductase with a preference for cyclic substrates. Catalyzes stereoselective conversion of 4-oxo-L-proline to cis-4-hydroxy-L-proline, likely a detoxification mechanism for ketoprolines. Mediates the formation of 2,5-dihydroxybenzoate (2,5-DHBA), a siderophore that chelates free cytoplasmic iron, thereby regulating iron transport and homeostasis while protecting cells against free radical-induced oxidative stress. The iron-siderophore complex is imported into mitochondria, providing an iron source for mitochondrial metabolic processes in particular heme synthesis. May act as a 3-hydroxybutyrate dehydrogenase. The polypeptide is Dehydrogenase/reductase SDR family member 6 (bdh2) (Danio rerio (Zebrafish)).